A 599-amino-acid polypeptide reads, in one-letter code: Kinesin light chain 2 (599 aa).

A coiled-coil region spans residues 78–143 (ILALSSHLGA…KQHLLFMSQI (66 aa)). Residues 154–163 (EKGDVPKDSL) show a composition bias toward basic and acidic residues. The interval 154–188 (EKGDVPKDSLDDLFPNEDEQSPAPSPGGGDVAAQH) is disordered. 2 positions are modified to phosphoserine: serine 174 and serine 178. 5 TPR repeats span residues 197–230 (LRTLHNLVIQYASQGRYEVAVPLCKQALEDLEKT), 239–272 (ATMLNILALVYRDQNKYKDAAHLLNDALAIREKT), 281–314 (AATLNNLAVLYGKRGKYKEAEPLCKRALEIREKV), 323–356 (AKQLSNLALLCQNQGKAEEVEYYYRRALEIYATR), and 365–398 (AKTKNNLASCYLKQGKYQDAETLYKEILTRAHEK). A Phosphoserine modification is found at serine 443. The stretch at 447 to 480 (NTTLRTLGALYRPEGKLEAAHTLEDCASRSRKQG) is one TPR 6 repeat. Residues 492–541 (LLKDGSGRGHRRGSRDVAGPQSESDLEESGPAAEWSGDGSGSLRRSGSFG) are disordered. Serine 505 and serine 515 each carry phosphoserine. Residues 532–541 (GSLRRSGSFG) show a composition bias toward low complexity. Phosphoserine occurs at positions 574, 575, and 582.

The protein belongs to the kinesin light chain family. In terms of assembly, oligomeric complex composed of two heavy chains and two light chains. Interacts (via TPR repeats) with PLEKHM2.

The protein resides in the cytoplasm. It is found in the cytoskeleton. Its subcellular location is the lysosome membrane. Kinesin is a microtubule-associated force-producing protein that plays a role in organelle transport. The light chain functions in coupling of cargo to the heavy chain or in the modulation of its ATPase activity. Through binding with PLEKHM2 and ARL8B, recruits kinesin-1 to lysosomes and hence direct lysosomes movement toward microtubule plus ends. The sequence is that of Kinesin light chain 2 from Mus musculus (Mouse).